Here is a 97-residue protein sequence, read N- to C-terminus: Bacterial microcompartment shell protein EutM (97 aa).

The region spanning 3 to 87 is the BMC domain; the sequence is ALGMIETRGL…PHGDLEEVFP (85 aa).

This sequence belongs to the bacterial microcompartments protein family. As to quaternary structure, homohexamer with a central pore of up to 8.6 Angstroms diameter. The hexamers pack into a two-dimensional array. Interacts with EutQ.

It localises to the bacterial microcompartment. The protein operates within amine and polyamine degradation; ethanolamine degradation. Its function is as follows. Probably a major component of the bacterial microcompartment (BMC) shell dedicated to ethanolamine degradation. Each homohexamer has a central pore with an opening of up to 8.6 Angstroms. A positively-charged funnel leads to the pore from each side of the hexamer. The pore probably allows metabolite passage into and out of the BMC. This chain is Bacterial microcompartment shell protein EutM (eutM), found in Escherichia coli O6:H1 (strain CFT073 / ATCC 700928 / UPEC).